Reading from the N-terminus, the 297-residue chain is Protein AKTIP homolog (297 aa).

The interval 13–75 (FLSDLDEKSS…QRSPSGSSPE (63 aa)) is disordered. The segment covering 17-42 (LDEKSSSSPHDEKKPGDGREVREEKS) has biased composition (basic and acidic residues). Polar residues predominate over residues 59–75 (MNLSIARQRSPSGSSPE). The UBC core domain occupies 84 to 232 (FLEYTLMAEY…VNECLRRCHN (149 aa)).

This sequence belongs to the ubiquitin-conjugating enzyme family. FTS subfamily.

The sequence is that of Protein AKTIP homolog from Nematostella vectensis (Starlet sea anemone).